The following is a 296-amino-acid chain: Porphobilinogen deaminase (296 aa).

C232 is subject to S-(dipyrrolylmethanemethyl)cysteine.

It belongs to the HMBS family. As to quaternary structure, monomer. It depends on dipyrromethane as a cofactor.

It catalyses the reaction 4 porphobilinogen + H2O = hydroxymethylbilane + 4 NH4(+). Its pathway is porphyrin-containing compound metabolism; protoporphyrin-IX biosynthesis; coproporphyrinogen-III from 5-aminolevulinate: step 2/4. Tetrapolymerization of the monopyrrole PBG into the hydroxymethylbilane pre-uroporphyrinogen in several discrete steps. In Corynebacterium aurimucosum (strain ATCC 700975 / DSM 44827 / CIP 107346 / CN-1) (Corynebacterium nigricans), this protein is Porphobilinogen deaminase.